The chain runs to 203 residues: MSKIIIATANKGKAKEFEKIFAKFNIEVATLADFPEIGEIEETGTTFAENAALKAETVASVLNQTVIADDSGLIVDALDGAPGVYSARYAGIAHDDAKNNEKLLKNLEGVEPDKRTARFHCTLAVATPSEKTSFYTGEVEGVIAEQLCGTNGFGYDPLFFLPEFGLTMAEIPAEKKNEISHRANAIKQLEKDLAEVVEKVTKK.

8–13 is a substrate binding site; sequence TANKGK. The Mg(2+) site is built by glutamate 41 and aspartate 70. The active-site Proton acceptor is aspartate 70. Residues serine 71, 153-156, lysine 176, and 181-182 each bind substrate; these read FGYD and HR.

It belongs to the HAM1 NTPase family. In terms of assembly, homodimer. It depends on Mg(2+) as a cofactor.

It catalyses the reaction XTP + H2O = XMP + diphosphate + H(+). The catalysed reaction is dITP + H2O = dIMP + diphosphate + H(+). The enzyme catalyses ITP + H2O = IMP + diphosphate + H(+). In terms of biological role, pyrophosphatase that catalyzes the hydrolysis of nucleoside triphosphates to their monophosphate derivatives, with a high preference for the non-canonical purine nucleotides XTP (xanthosine triphosphate), dITP (deoxyinosine triphosphate) and ITP. Seems to function as a house-cleaning enzyme that removes non-canonical purine nucleotides from the nucleotide pool, thus preventing their incorporation into DNA/RNA and avoiding chromosomal lesions. The chain is dITP/XTP pyrophosphatase from Listeria monocytogenes serotype 4b (strain F2365).